Consider the following 206-residue polypeptide: Flavin reductase (NADPH) (206 aa).

NADP(+) contacts are provided by glycine 10, threonine 12, glycine 13, glutamine 14, threonine 15, arginine 35, serine 38, and arginine 39. A Phosphoserine modification is found at serine 42. The NADP(+) site is built by aspartate 54, valine 55, leucine 75, glycine 76, and arginine 78. Serine 82 is subject to Phosphoserine. The NADP(+) site is built by methionine 87, cysteine 109, histidine 132, histidine 153, and isoleucine 154. The active-site S-nitroso-cysteine intermediate; for S-nitroso-CoA-dependent nitrosyltransferase activity is cysteine 109. Cysteine 188 (S-nitroso-cysteine intermediate; for S-nitroso-CoA-dependent nitrosyltransferase activity) is an active-site residue.

This sequence belongs to the BLVRB family. As to quaternary structure, monomer. In terms of tissue distribution, predominantly expressed in liver and erythrocytes. At lower levels in heart, lung, adrenal gland and cerebrum. Expressed in adult red blood cells.

It is found in the cytoplasm. It carries out the reaction reduced riboflavin + NADP(+) = riboflavin + NADPH + 2 H(+). It catalyses the reaction bilirubin IXbeta + NADP(+) = biliverdin IXbeta + NADPH + H(+). The enzyme catalyses FMNH2 + NAD(+) = FMN + NADH + 2 H(+). The catalysed reaction is FMNH2 + NADP(+) = FMN + NADPH + 2 H(+). It carries out the reaction S-nitroso-CoA + L-cysteinyl-[protein] = S-nitroso-L-cysteinyl-[protein] + CoA. It catalyses the reaction L-cysteinyl-[SCAN] + S-nitroso-CoA = S-nitroso-L-cysteinyl-[SCAN] + CoA. The enzyme catalyses S-nitroso-L-cysteinyl-[SCAN] + L-cysteinyl-[protein] = L-cysteinyl-[SCAN] + S-nitroso-L-cysteinyl-[protein]. Mesobiliverdin acts as a competitive inhibitor for flavin reduction, indicating that flavin and tetrapyrrole substrates compete for the same site. Inhibited by a wide range of xanthene-based drugs, such as phloxine B, erythrosin B, tamibarotene, sulfasalazine, olsalazine, febuxostat, ataluren (PTC124) and deferasirox. Its function is as follows. Enzyme that can both act as a NAD(P)H-dependent reductase and a S-nitroso-CoA-dependent nitrosyltransferase. Promotes fetal heme degradation during development. Also expressed in adult tissues, where it acts as a regulator of hematopoiesis, intermediary metabolism (glutaminolysis, glycolysis, TCA cycle and pentose phosphate pathway) and insulin signaling. Has a broad specificity oxidoreductase activity by catalyzing the NAD(P)H-dependent reduction of a variety of flavins, such as riboflavin, FAD or FMN, biliverdins, methemoglobin and PQQ (pyrroloquinoline quinone). Contributes to fetal heme catabolism by catalyzing reduction of biliverdin IXbeta into bilirubin IXbeta in the liver. Biliverdin IXbeta, which constitutes the major heme catabolite in the fetus is not present in adult. Does not reduce bilirubin IXalpha. Can also reduce the complexed Fe(3+) iron to Fe(2+) in the presence of FMN and NADPH. Acts as a protein nitrosyltransferase by catalyzing nitrosylation of cysteine residues of target proteins, such as HMOX2, INSR and IRS1. S-nitroso-CoA-dependent nitrosyltransferase activity is mediated via a 'ping-pong' mechanism: BLVRB first associates with both S-nitroso-CoA and protein substrate, nitric oxide group is then transferred from S-nitroso-CoA to Cys-109 and Cys-188 residues of BLVRB and from S-nitroso-BLVRB to the protein substrate. Inhibits insulin signaling by mediating nitrosylation of INSR and IRS1, leading to their inhibition. The polypeptide is Flavin reductase (NADPH) (Homo sapiens (Human)).